A 288-amino-acid chain; its full sequence is 4-hydroxybenzoate octaprenyltransferase (288 aa).

6 helical membrane passes run Leu-33–Val-53, Leu-99–Ile-119, Glu-163–Tyr-183, Leu-213–Asn-233, Gly-234–Gln-254, and Ala-268–Leu-288.

This sequence belongs to the UbiA prenyltransferase family. Mg(2+) serves as cofactor.

It is found in the cell inner membrane. The enzyme catalyses all-trans-octaprenyl diphosphate + 4-hydroxybenzoate = 4-hydroxy-3-(all-trans-octaprenyl)benzoate + diphosphate. It participates in cofactor biosynthesis; ubiquinone biosynthesis. Functionally, catalyzes the prenylation of para-hydroxybenzoate (PHB) with an all-trans polyprenyl group. Mediates the second step in the final reaction sequence of ubiquinone-8 (UQ-8) biosynthesis, which is the condensation of the polyisoprenoid side chain with PHB, generating the first membrane-bound Q intermediate 3-octaprenyl-4-hydroxybenzoate. In Klebsiella pneumoniae subsp. pneumoniae (strain ATCC 700721 / MGH 78578), this protein is 4-hydroxybenzoate octaprenyltransferase.